A 387-amino-acid chain; its full sequence is Phosphoglycerate kinase (387 aa).

Residues 21–23 (DLN), Arg-36, 59–62 (HLGR), Arg-113, and Arg-146 contribute to the substrate site. ATP is bound by residues Lys-197, Glu-314, and 340 to 343 (GGDT).

Belongs to the phosphoglycerate kinase family. Monomer.

Its subcellular location is the cytoplasm. The catalysed reaction is (2R)-3-phosphoglycerate + ATP = (2R)-3-phospho-glyceroyl phosphate + ADP. It participates in carbohydrate degradation; glycolysis; pyruvate from D-glyceraldehyde 3-phosphate: step 2/5. This is Phosphoglycerate kinase from Aliivibrio salmonicida (strain LFI1238) (Vibrio salmonicida (strain LFI1238)).